The primary structure comprises 266 residues: Potassium/proton antiporter CemA (266 aa).

Helical transmembrane passes span 46–66 (VIVSVRCLITLIFVPLFINIL), 151–171 (FLSFLSLSVVFLLLKPQIIIL), and 226–246 (FMSLFVATFPVFLDTVFKYWI).

The protein belongs to the CemA family.

The protein localises to the plastid. It localises to the chloroplast inner membrane. The enzyme catalyses K(+)(in) + H(+)(out) = K(+)(out) + H(+)(in). Contributes to K(+)/H(+) antiport activity by supporting proton efflux to control proton extrusion and homeostasis in chloroplasts in a light-dependent manner to modulate photosynthesis. Prevents excessive induction of non-photochemical quenching (NPQ) under continuous-light conditions. Indirectly promotes efficient inorganic carbon uptake into chloroplasts. In Chlorella vulgaris (Green alga), this protein is Potassium/proton antiporter CemA.